A 223-amino-acid polypeptide reads, in one-letter code: Small ribosomal subunit protein uS3 (223 aa).

Residues Val-39–Arg-107 enclose the KH type-2 domain.

Belongs to the universal ribosomal protein uS3 family. Part of the 30S ribosomal subunit. Forms a tight complex with proteins S10 and S14.

Its function is as follows. Binds the lower part of the 30S subunit head. Binds mRNA in the 70S ribosome, positioning it for translation. The polypeptide is Small ribosomal subunit protein uS3 (Francisella tularensis subsp. holarctica (strain FTNF002-00 / FTA)).